Reading from the N-terminus, the 616-residue chain is MKRKLDANDVPSPEVAETKETSDADEADFESLNLDPRLRQALIKEKFTKPTPVQAKAIPLALAGKDILARAKTGSGKTAAYVLPILQTILQKKAADPSLKATTGLILVPTRELAEQVQKVVTTFAAFCGKDVRSVNLTQKVSEAVQRTMLSDYPDIVISTPARVIANLGNSSLSLDNLTHLVIDEADLVLSYGYDEDINALSKAIPRGVQTFLMSATLTSEVDTLKGLFCRSPVVLKLEDKEEKGAGVSQFVVKCAEDEKFLLTYVIFKLQLIKGKVIIFVGDIDRCYRLKLFLEQFGVKSCVLNSELPVNSRIHVVQEFNKGVYDIIIAADDQEVLGSKSKKAKNAGADEEEEAAGVMGSSDDEEAEDDKKSNRPDKRRKLTAKEKDYGISRGIDFQNVACVLNFDLPTTAKSYTHRIGRTGRGGKTGMALSFVVPADQYGKHKPTSFPTAKHDEAVLAKIVKRQSKHGHEVKPYHFEMSQVDAFRYRMTDGLRAITRLAVQEARAREIRQELVKSEKLKRHFEDNPDELRQLRHDGELRSARIQPHLKHIPEYLMPSKGRKGISSEDVGFVGFRKSSDNRIRKARDKNRAKGKGRKPSGVRKVDPLKTFNRGRK.

The interval 1 to 29 (MKRKLDANDVPSPEVAETKETSDADEADF) is disordered. A Q motif motif is present at residues 27–55 (ADFESLNLDPRLRQALIKEKFTKPTPVQA). Residues 58-236 (IPLALAGKDI…GLFCRSPVVL (179 aa)) form the Helicase ATP-binding domain. Residue 71–78 (AKTGSGKT) coordinates ATP. The DEAD box motif lies at 184-187 (DEAD). One can recognise a Helicase C-terminal domain in the interval 247–481 (GVSQFVVKCA…EVKPYHFEMS (235 aa)). 2 disordered regions span residues 340–385 (KSKK…LTAK) and 579–616 (SDNR…RGRK). The span at 584–601 (RKARDKNRAKGKGRKPSG) shows a compositional bias: basic residues.

This sequence belongs to the DEAD box helicase family. DDX56/DBP9 subfamily.

Its subcellular location is the nucleus. It is found in the nucleolus. It catalyses the reaction ATP + H2O = ADP + phosphate + H(+). ATP-binding RNA helicase involved in the biogenesis of 60S ribosomal subunits and is required for the normal formation of 25S and 5.8S rRNAs. This chain is ATP-dependent RNA helicase dbp9 (dbp9), found in Aspergillus niger (strain ATCC MYA-4892 / CBS 513.88 / FGSC A1513).